A 729-amino-acid polypeptide reads, in one-letter code: Fibroblast growth factor receptor homolog 1 (729 aa).

The first 36 residues, 1–36 (MAAAWSWRASHSTITMTSGSLVVLFLLLSIWQPAVQ), serve as a signal peptide directing secretion. Topologically, residues 37–309 (VEGRRQMANS…VASGSLHSTS (273 aa)) are extracellular. The disordered stretch occupies residues 56–101 (ARSQNKTPAITNNANQSSTSSADLDDGAADDDDNKADLPVNVSSKP). Positions 66–77 (TNNANQSSTSSA) are enriched in low complexity. An N-linked (GlcNAc...) asparagine glycan is attached at asparagine 70. The span at 78–89 (DLDDGAADDDDN) shows a compositional bias: acidic residues. N-linked (GlcNAc...) asparagine glycans are attached at residues asparagine 96, asparagine 134, asparagine 140, asparagine 171, asparagine 207, asparagine 213, asparagine 242, asparagine 246, and asparagine 282. 2 consecutive Ig-like C2-type domains span residues 106 to 192 (PKKM…VIVS) and 203 to 279 (TGPL…NSLG). A disulfide bridge connects residues cysteine 125 and cysteine 174. Cysteine 220 and cysteine 272 are joined by a disulfide. Residues 310-330 (FVYIFVFGGLIFIFMTTLFVF) form a helical membrane-spanning segment. Residues 331–729 (YAIRKMKHEK…TDNLQKWCNY (399 aa)) lie on the Cytoplasmic side of the membrane. The 277-residue stretch at 416–692 (LVLGATLGEG…EIVEYMDKLL (277 aa)) folds into the Protein kinase domain. Residues 422–430 (LGEGAFGRV) and lysine 443 each bind ATP. Aspartate 556 serves as the catalytic Proton acceptor. Tyrosine 587 is modified (phosphotyrosine; by autocatalysis).

The protein belongs to the protein kinase superfamily. Tyr protein kinase family. Fibroblast growth factor receptor subfamily. In terms of tissue distribution, in early embryos, expression is specific to mesodermal primordium and invaginated mesodermal cells. At later stages, expression is seen in putative muscle precursor cells and in the CNS.

It localises to the membrane. The enzyme catalyses L-tyrosyl-[protein] + ATP = O-phospho-L-tyrosyl-[protein] + ADP + H(+). Functionally, may be required for patterning of muscle precursor cells. May be essential for generation of mesodermal and endodermal layers, invaginations of various types of cells and CNS formation. The chain is Fibroblast growth factor receptor homolog 1 (htl) from Drosophila melanogaster (Fruit fly).